We begin with the raw amino-acid sequence, 416 residues long: Serine hydroxymethyltransferase 1 (416 aa).

(6S)-5,6,7,8-tetrahydrofolate contacts are provided by residues Leu-121 and 125-127 (GHL). Lys-229 carries the post-translational modification N6-(pyridoxal phosphate)lysine. Residues Glu-245 and 354–356 (SPF) each bind (6S)-5,6,7,8-tetrahydrofolate.

This sequence belongs to the SHMT family. In terms of assembly, homodimer. Pyridoxal 5'-phosphate is required as a cofactor.

It is found in the cytoplasm. It carries out the reaction (6R)-5,10-methylene-5,6,7,8-tetrahydrofolate + glycine + H2O = (6S)-5,6,7,8-tetrahydrofolate + L-serine. It functions in the pathway one-carbon metabolism; tetrahydrofolate interconversion. It participates in amino-acid biosynthesis; glycine biosynthesis; glycine from L-serine: step 1/1. Its function is as follows. Catalyzes the reversible interconversion of serine and glycine with tetrahydrofolate (THF) serving as the one-carbon carrier. This reaction serves as the major source of one-carbon groups required for the biosynthesis of purines, thymidylate, methionine, and other important biomolecules. Also exhibits THF-independent aldolase activity toward beta-hydroxyamino acids, producing glycine and aldehydes, via a retro-aldol mechanism. This Vibrio parahaemolyticus serotype O3:K6 (strain RIMD 2210633) protein is Serine hydroxymethyltransferase 1.